A 208-amino-acid polypeptide reads, in one-letter code: dTTP/UTP pyrophosphatase (208 aa).

The active-site Proton acceptor is the Asp-79.

This sequence belongs to the Maf family. YhdE subfamily. The cofactor is a divalent metal cation.

The protein resides in the cytoplasm. It carries out the reaction dTTP + H2O = dTMP + diphosphate + H(+). The catalysed reaction is UTP + H2O = UMP + diphosphate + H(+). Its function is as follows. Nucleoside triphosphate pyrophosphatase that hydrolyzes dTTP and UTP. May have a dual role in cell division arrest and in preventing the incorporation of modified nucleotides into cellular nucleic acids. The protein is dTTP/UTP pyrophosphatase of Mesorhizobium japonicum (strain LMG 29417 / CECT 9101 / MAFF 303099) (Mesorhizobium loti (strain MAFF 303099)).